Here is a 291-residue protein sequence, read N- to C-terminus: MDRRESSVMKSPSLRLPAPAKLNLTLRITGRRPDGYHDLQTVFQFVDVCDWLEFRADASGEIRLQTSLAGVPAERNLIVRAARLLKEYAGVAAGADIVLEKNLPMGGGLGGGSSNAATTLVALNRLWDLGLDRQTLMNLGLRLGADVPIFVFGEGAWAEGVGERLQVLELPEPWYVIVVPPCHVSTAEIFNAPDLTRDNDPITIADFLAGSHQNHCLDAVVRRYPVVGEAMCVLGRYSRDVRLTGTGACVYSVHGSEEEAKAACDDLSRDWVAIVASGRNLSPLYEALNER.

Residue K21 is part of the active site. P104–S114 serves as a coordination point for ATP. Residue D146 is part of the active site.

It belongs to the GHMP kinase family. IspE subfamily.

The enzyme catalyses 4-CDP-2-C-methyl-D-erythritol + ATP = 4-CDP-2-C-methyl-D-erythritol 2-phosphate + ADP + H(+). The protein operates within isoprenoid biosynthesis; isopentenyl diphosphate biosynthesis via DXP pathway; isopentenyl diphosphate from 1-deoxy-D-xylulose 5-phosphate: step 3/6. Catalyzes the phosphorylation of the position 2 hydroxy group of 4-diphosphocytidyl-2C-methyl-D-erythritol. The sequence is that of 4-diphosphocytidyl-2-C-methyl-D-erythritol kinase from Methylococcus capsulatus (strain ATCC 33009 / NCIMB 11132 / Bath).